Reading from the N-terminus, the 148-residue chain is Lysozyme C (148 aa).

The signal sequence occupies residues 1 to 18; that stretch reads MKALTILGLVLLSVTVQG. The C-type lysozyme domain occupies 19-148; that stretch reads KIFERCELAR…VSQYVKGCGV (130 aa). 4 disulfide bridges follow: Cys-24–Cys-146, Cys-48–Cys-134, Cys-83–Cys-99, and Cys-95–Cys-113. Residues Glu-53 and Asp-71 contribute to the active site.

Belongs to the glycosyl hydrolase 22 family. Monomer.

Its subcellular location is the secreted. The enzyme catalyses Hydrolysis of (1-&gt;4)-beta-linkages between N-acetylmuramic acid and N-acetyl-D-glucosamine residues in a peptidoglycan and between N-acetyl-D-glucosamine residues in chitodextrins.. Its function is as follows. Lysozymes have primarily a bacteriolytic function; those in tissues and body fluids are associated with the monocyte-macrophage system and enhance the activity of immunoagents. Also plays a role in digestion in this species. This chain is Lysozyme C (LYZ), found in Semnopithecus entellus (Northern plains gray langur).